The following is a 151-amino-acid chain: Large ribosomal subunit protein bL9 (151 aa).

The protein belongs to the bacterial ribosomal protein bL9 family.

In terms of biological role, binds to the 23S rRNA. In Dehalococcoides mccartyi (strain ATCC BAA-2266 / KCTC 15142 / 195) (Dehalococcoides ethenogenes (strain 195)), this protein is Large ribosomal subunit protein bL9.